Consider the following 218-residue polypeptide: Guanylate kinase (218 aa).

The Guanylate kinase-like domain occupies 17–196 (GVLLALSSPS…ALEKLNEILH (180 aa)). 24 to 31 (SPSGAGKT) contacts ATP.

It belongs to the guanylate kinase family.

Its subcellular location is the cytoplasm. The enzyme catalyses GMP + ATP = GDP + ADP. Its function is as follows. Essential for recycling GMP and indirectly, cGMP. This chain is Guanylate kinase, found in Maricaulis maris (strain MCS10) (Caulobacter maris).